Reading from the N-terminus, the 581-residue chain is Arginine--tRNA ligase (581 aa).

Positions 126–136 (PNLAKEMHVGH) match the 'HIGH' region motif.

This sequence belongs to the class-I aminoacyl-tRNA synthetase family. In terms of assembly, monomer.

It localises to the cytoplasm. The catalysed reaction is tRNA(Arg) + L-arginine + ATP = L-arginyl-tRNA(Arg) + AMP + diphosphate. The sequence is that of Arginine--tRNA ligase from Shewanella halifaxensis (strain HAW-EB4).